Reading from the N-terminus, the 202-residue chain is Putative 3-methyladenine DNA glycosylase (202 aa).

The protein belongs to the DNA glycosylase MPG family.

This Staphylococcus aureus (strain MRSA252) protein is Putative 3-methyladenine DNA glycosylase.